Consider the following 163-residue polypeptide: UPF0416 protein RBE_0909 (163 aa).

It belongs to the UPF0416 family.

The sequence is that of UPF0416 protein RBE_0909 from Rickettsia bellii (strain RML369-C).